The following is an 88-amino-acid chain: MIKNLSISSSLIPDKQRGSVESQVFFLTNRVLRLTQHLQLHGRDYSSQRGLWLILSKRKQLLVYLSKRDKLRYDDLIGQLSIRRLKTR.

It belongs to the universal ribosomal protein uS15 family. Part of the 30S ribosomal subunit.

The protein resides in the plastid. It localises to the chloroplast. This Pinus koraiensis (Korean pine) protein is Small ribosomal subunit protein uS15c (rps15).